Here is a 97-residue protein sequence, read N- to C-terminus: Acylphosphatase (97 aa).

One can recognise an Acylphosphatase-like domain in the interval 11-97; the sequence is TYYVRVRGTV…EKRYERFEQH (87 aa). Residues R26 and N44 contribute to the active site. Positions 76-97 are disordered; it reads RVTEVSGEERSTEKRYERFEQH. Over residues 82–97 the composition is skewed to basic and acidic residues; the sequence is GEERSTEKRYERFEQH.

This sequence belongs to the acylphosphatase family.

The catalysed reaction is an acyl phosphate + H2O = a carboxylate + phosphate + H(+). This chain is Acylphosphatase (acyP), found in Paraburkholderia xenovorans (strain LB400).